The chain runs to 603 residues: Pentatricopeptide repeat-containing protein At2g02980, chloroplastic (603 aa).

Residues 1 to 38 constitute a chloroplast transit peptide; that stretch reads MAISSASLISSFSHAETFTKHSKIDTVNTQNPILLISK. 10 PPR repeats span residues 93 to 127, 128 to 162, 163 to 193, 194 to 228, 229 to 263, 264 to 294, 295 to 329, 330 to 365, 366 to 400, and 432 to 466; these read DIVIFNSMARGYSRFTNPLEVFSLFVEILEDGILP, DNYTFPSLLKACAVAKALEEGRQLHCLSMKLGLDD, NVYVCPTLINMYTECEDVDSARCVFDRIVEP, CVVCYNAMITGYARRNRPNEALSLFREMQGKYLKP, NEITLLSVLSSCALLGSLDLGKWIHKYAKKHSFCK, YVKVNTALIDMFAKCGSLDDAVSIFEKMRYK, DTQAWSAMIVAYANHGKAEKSMLMFERMRSENVQP, DEITFLGLLNACSHTGRVEEGRKYFSQMVSKFGIVP, SIKHYGSMVDLLSRAGNLEDAYEFIDKLPISPTPM, and HGGDYVILSNLYARNKKWEYVDSLRKVMKDRKAVK. The segment at 401 to 476 is type E motif; that stretch reads LWRILLAACS…VPGCSSIEVN (76 aa). Positions 477 to 507 are type E(+) motif; sequence NVVHEFFSGDGVKSATTKLHRALDEMVKELK. The segment at 508-603 is type DYW motif; sequence LSGYVPDTSM…DGKCSCGDFW (96 aa).

Belongs to the PPR family. PCMP-H subfamily.

The protein resides in the plastid. The protein localises to the chloroplast. Functionally, involved in RNA editing event in chloroplasts. Required for the editing of a single site in ndhD transcript, which is a plastid-encoded subunits of the chloroplast NAD(P)H dehydrogenase (NDH) complex. Not essential for the activity of the NDH complex of the photosynthetic electron transport chain. The sequence is that of Pentatricopeptide repeat-containing protein At2g02980, chloroplastic (PCMP-H26) from Arabidopsis thaliana (Mouse-ear cress).